Consider the following 200-residue polypeptide: Holliday junction branch migration complex subunit RuvA (200 aa).

Residues 1–63 (MIASVRGVVT…EDSLTLYGFA (63 aa)) are domain I. Residues 64-142 (DDDAKALFEL…PVPVGADSAA (79 aa)) are domain II. Residues 143–151 (GVTTGAWPE) are flexible linker. The segment at 151–200 (EQVRQALVGLGWTAAQADQAVTAVAETVDGAVPPVPVLLRQAIRLLGRTR) is domain III.

Belongs to the RuvA family. As to quaternary structure, homotetramer. Forms an RuvA(8)-RuvB(12)-Holliday junction (HJ) complex. HJ DNA is sandwiched between 2 RuvA tetramers; dsDNA enters through RuvA and exits via RuvB. An RuvB hexamer assembles on each DNA strand where it exits the tetramer. Each RuvB hexamer is contacted by two RuvA subunits (via domain III) on 2 adjacent RuvB subunits; this complex drives branch migration. In the full resolvosome a probable DNA-RuvA(4)-RuvB(12)-RuvC(2) complex forms which resolves the HJ.

Its subcellular location is the cytoplasm. Its function is as follows. The RuvA-RuvB-RuvC complex processes Holliday junction (HJ) DNA during genetic recombination and DNA repair, while the RuvA-RuvB complex plays an important role in the rescue of blocked DNA replication forks via replication fork reversal (RFR). RuvA specifically binds to HJ cruciform DNA, conferring on it an open structure. The RuvB hexamer acts as an ATP-dependent pump, pulling dsDNA into and through the RuvAB complex. HJ branch migration allows RuvC to scan DNA until it finds its consensus sequence, where it cleaves and resolves the cruciform DNA. This is Holliday junction branch migration complex subunit RuvA from Salinispora tropica (strain ATCC BAA-916 / DSM 44818 / JCM 13857 / NBRC 105044 / CNB-440).